The following is a 469-amino-acid chain: Cysteine--tRNA ligase (469 aa).

Position 33 (Cys-33) interacts with Zn(2+). Positions 35 to 45 (ATVQGLPHIGH) match the 'HIGH' region motif. 3 residues coordinate Zn(2+): Cys-211, His-236, and Glu-240. The 'KMSKS' region signature appears at 267-271 (KMSKS). Lys-270 contributes to the ATP binding site.

It belongs to the class-I aminoacyl-tRNA synthetase family. Monomer. The cofactor is Zn(2+).

It localises to the cytoplasm. It carries out the reaction tRNA(Cys) + L-cysteine + ATP = L-cysteinyl-tRNA(Cys) + AMP + diphosphate. The chain is Cysteine--tRNA ligase (cysS) from Mycobacterium tuberculosis (strain CDC 1551 / Oshkosh).